Consider the following 383-residue polypeptide: tRNA-specific 2-thiouridylase MnmA (383 aa).

Residues 9–16 (GMSGGVDS) and methionine 35 contribute to the ATP site. The interaction with target base in tRNA stretch occupies residues 95–97 (NPD). Cysteine 100 (nucleophile) is an active-site residue. Cysteine 100 and cysteine 196 are oxidised to a cystine. Glycine 124 contributes to the ATP binding site. An interaction with tRNA region spans residues 146-148 (KDQ). Catalysis depends on cysteine 196, which acts as the Cysteine persulfide intermediate. The segment at 308-309 (RY) is interaction with tRNA.

The protein belongs to the MnmA/TRMU family.

It localises to the cytoplasm. It catalyses the reaction S-sulfanyl-L-cysteinyl-[protein] + uridine(34) in tRNA + AH2 + ATP = 2-thiouridine(34) in tRNA + L-cysteinyl-[protein] + A + AMP + diphosphate + H(+). Catalyzes the 2-thiolation of uridine at the wobble position (U34) of tRNA, leading to the formation of s(2)U34. The protein is tRNA-specific 2-thiouridylase MnmA of Burkholderia pseudomallei (strain 668).